A 402-amino-acid chain; its full sequence is Acetate kinase (402 aa).

Asn-13 provides a ligand contact to Mg(2+). Lys-20 contacts ATP. Arg-94 serves as a coordination point for substrate. The active-site Proton donor/acceptor is the Asp-151. Residues 211–215 (HLGNG), 285–287 (DFR), and 333–337 (GVGEN) contribute to the ATP site. Glu-387 provides a ligand contact to Mg(2+).

This sequence belongs to the acetokinase family. As to quaternary structure, homodimer. Mg(2+) is required as a cofactor. It depends on Mn(2+) as a cofactor.

It is found in the cytoplasm. The catalysed reaction is acetate + ATP = acetyl phosphate + ADP. It functions in the pathway metabolic intermediate biosynthesis; acetyl-CoA biosynthesis; acetyl-CoA from acetate: step 1/2. In terms of biological role, catalyzes the formation of acetyl phosphate from acetate and ATP. Can also catalyze the reverse reaction. The protein is Acetate kinase of Nocardia farcinica (strain IFM 10152).